We begin with the raw amino-acid sequence, 513 residues long: GMP synthase [glutamine-hydrolyzing] (513 aa).

Positions 8–198 (KIIVLDYGSQ…ALNICGAKGN (191 aa)) constitute a Glutamine amidotransferase type-1 domain. C85 functions as the Nucleophile in the catalytic mechanism. Catalysis depends on residues H172 and E174. Residues 199 to 388 (WSMENFIDMQ…LGMPDEIVWR (190 aa)) form the GMPS ATP-PPase domain. Residue 226–232 (SGGVDSS) coordinates ATP.

Homodimer.

It catalyses the reaction XMP + L-glutamine + ATP + H2O = GMP + L-glutamate + AMP + diphosphate + 2 H(+). The protein operates within purine metabolism; GMP biosynthesis; GMP from XMP (L-Gln route): step 1/1. Functionally, catalyzes the synthesis of GMP from XMP. The protein is GMP synthase [glutamine-hydrolyzing] (guaA) of Lactococcus lactis subsp. cremoris (strain MG1363).